Reading from the N-terminus, the 702-residue chain is Cytolytic toxin-alpha (702 aa).

Residues 2 to 265 form a structural MACPF/CDC pore-forming domain region; sequence SSDIIMAGLG…KADLLVRDIS (264 aa). Asparagine 93, asparagine 100, asparagine 201, asparagine 287, and asparagine 311 each carry an N-linked (GlcNAc...) asparagine glycan. Positions 266-385 are structural FAT domain; the sequence is QGLVRKVHSI…DIIEETKHKA (120 aa). The segment at 386-513 is thioredoxin (THX) domain; that stretch reads VLSQSQMVKD…PIISAVEKIV (128 aa). The B30.2/SPRY domain maps to 505 to 702; sequence IISAVEKIVD…RPYHGTVRLL (198 aa). The N-linked (GlcNAc...) asparagine glycan is linked to asparagine 530.

It belongs to the SNTX/VTX toxin family. As to quaternary structure, heterodimer of alpha and beta subunits; non-covalently linked. Also associates into tetramers or even higher aggregates. In terms of processing, intrachain disulfide bonds may be present in the heterodimer. In terms of tissue distribution, expressed by the venom gland.

It localises to the secreted. In terms of biological role, this heterodimer induces potent hemolytic activities (when tested on rabbit erythrocytes, EC(50)=25-56 ng/mL) due to its ability to form pores in the cell membrane. The pore may be composed of 10 alpha/beta heterodimers. The toxin shows cardiovascular effects that include a vasorelaxant action that may involve the L-arginine-nitric oxid synthase pathway. In addition, it displays edema-inducing activities, increases vascular permeability. It also shows myotoxic activities and interferes irreversibly with neuromuscular function. It also induces irreversible platelet aggregation in rabbit or rat (but not in human or mouse) whole blood. In addition, it has been observed to increase spontaneous quantal acetylcholine release from isolated frog cutaneous pectoris motor endings. The protein is Cytolytic toxin-alpha of Scorpaena plumieri (Spotted scorpionfish).